Here is a 314-residue protein sequence, read N- to C-terminus: tRNA dimethylallyltransferase (314 aa).

Residue 13 to 20 (GPTAVGKT) coordinates ATP. Position 15-20 (15-20 (TAVGKT)) interacts with substrate. The segment at 38 to 41 (DSMQ) is interaction with substrate tRNA.

This sequence belongs to the IPP transferase family. In terms of assembly, monomer. Requires Mg(2+) as cofactor.

The enzyme catalyses adenosine(37) in tRNA + dimethylallyl diphosphate = N(6)-dimethylallyladenosine(37) in tRNA + diphosphate. In terms of biological role, catalyzes the transfer of a dimethylallyl group onto the adenine at position 37 in tRNAs that read codons beginning with uridine, leading to the formation of N6-(dimethylallyl)adenosine (i(6)A). The chain is tRNA dimethylallyltransferase from Bacillus licheniformis (strain ATCC 14580 / DSM 13 / JCM 2505 / CCUG 7422 / NBRC 12200 / NCIMB 9375 / NCTC 10341 / NRRL NRS-1264 / Gibson 46).